We begin with the raw amino-acid sequence, 227 residues long: UPF0173 metal-dependent hydrolase BCAH820_4729 (227 aa).

The protein belongs to the UPF0173 family.

This is UPF0173 metal-dependent hydrolase BCAH820_4729 from Bacillus cereus (strain AH820).